The primary structure comprises 50 residues: Large ribosomal subunit protein bL33 (50 aa).

Belongs to the bacterial ribosomal protein bL33 family.

The protein is Large ribosomal subunit protein bL33 of Sulfurovum sp. (strain NBC37-1).